A 126-amino-acid chain; its full sequence is Small ribosomal subunit protein uS13 (126 aa).

Residues 92–126 (HRRGLPANGQRTHTNARTRKGPRKGMLQRRPAATK) are disordered. Residues 105–118 (TNARTRKGPRKGML) show a composition bias toward basic residues.

Belongs to the universal ribosomal protein uS13 family. Part of the 30S ribosomal subunit. Forms a loose heterodimer with protein S19. Forms two bridges to the 50S subunit in the 70S ribosome.

Functionally, located at the top of the head of the 30S subunit, it contacts several helices of the 16S rRNA. In the 70S ribosome it contacts the 23S rRNA (bridge B1a) and protein L5 of the 50S subunit (bridge B1b), connecting the 2 subunits; these bridges are implicated in subunit movement. Contacts the tRNAs in the A and P-sites. The polypeptide is Small ribosomal subunit protein uS13 (Sorangium cellulosum (strain So ce56) (Polyangium cellulosum (strain So ce56))).